Reading from the N-terminus, the 90-residue chain is Kunitz-type serine protease inhibitor C1 (90 aa).

A signal peptide spans 1–24 (MSSGGLLLLLGLLTLWAELTPISG). Gln-25 bears the Pyrrolidone carboxylic acid mark. Residues 31–81 (CNLAPESGRCRGHLRRIYYNPDSNKCEVFFYGGCGGNDNNFETRKKCRQTC) enclose the BPTI/Kunitz inhibitor domain. 3 disulfides stabilise this stretch: Cys-31–Cys-81, Cys-40–Cys-64, and Cys-56–Cys-77. A propeptide spanning residues 85 to 90 (RKGRPT) is cleaved from the precursor.

This sequence belongs to the venom Kunitz-type family. In terms of tissue distribution, expressed by the venom gland.

It localises to the secreted. In terms of biological role, serine protease inhibitor that inhibits trypsin. The sequence is that of Kunitz-type serine protease inhibitor C1 from Daboia siamensis (Eastern Russel's viper).